Consider the following 668-residue polypeptide: Threonine--tRNA ligase (668 aa).

Residues 1–64 (MSEAIFLTFP…ADGKIEIITR (64 aa)) form the TGS domain. The tract at residues 245–553 (DHRKLGREMD…LIENFAGHLP (309 aa)) is catalytic. Zn(2+)-binding residues include C347, H398, and H530.

It belongs to the class-II aminoacyl-tRNA synthetase family. In terms of assembly, homodimer. The cofactor is Zn(2+).

It localises to the cytoplasm. It catalyses the reaction tRNA(Thr) + L-threonine + ATP = L-threonyl-tRNA(Thr) + AMP + diphosphate + H(+). Its function is as follows. Catalyzes the attachment of threonine to tRNA(Thr) in a two-step reaction: L-threonine is first activated by ATP to form Thr-AMP and then transferred to the acceptor end of tRNA(Thr). Also edits incorrectly charged L-seryl-tRNA(Thr). The chain is Threonine--tRNA ligase from Rhizobium leguminosarum bv. trifolii (strain WSM2304).